The chain runs to 157 residues: Transcription elongation factor GreA (157 aa).

Residues 9-30 (LEGAQQLKEELKRRKTTDRKRI) adopt a coiled-coil conformation.

It belongs to the GreA/GreB family.

Functionally, necessary for efficient RNA polymerase transcription elongation past template-encoded arresting sites. The arresting sites in DNA have the property of trapping a certain fraction of elongating RNA polymerases that pass through, resulting in locked ternary complexes. Cleavage of the nascent transcript by cleavage factors such as GreA or GreB allows the resumption of elongation from the new 3'terminus. GreA releases sequences of 2 to 3 nucleotides. This chain is Transcription elongation factor GreA, found in Magnetococcus marinus (strain ATCC BAA-1437 / JCM 17883 / MC-1).